The primary structure comprises 572 residues: MRLSIYSSILLLRAMCLVRPTFGFPATTCRCMPGDSCWPSSTDWAHFNASIGGRLIATQPLAQACHDPYYNETECQYLQKHWTLPALHDISPSSIMAAAVAKDTCDAFTPRSKPCAPGDMVVYSVNASSPDDFSRTIRFSQQRNIRLVIRNTGHDYLGKSTGAGALSIWTHYLKDIEFVNYTSSSYTGPAFTMAAGVQGSDIYNVANGRGLVVVGGECASVGPVGGYTQGGGHSALSSRFGLAADQVLEWQVVDGTGRLLTASPTQNPDLYWALSGGGGGTYGVVYSMTVKAFPDFPVTGVVLQFDTKNTSSKDFFQAVSYYHRDLPTYTAAGGMAIAQITRSSFLLTPLTLPNKTTEEARSLIAPFIHELETLHIPYQLNITQSATYLEHYKKLIEPNPTQLVQNGQYGGRLLPLNVIESNNTQLTEAVKTITQDGVVFVGIGLNVSSSVVGDVWNSVLPAWRTAALSVLLSTDWPAGANRSTMKTLADRMTSKWVPILTALSPDSGCYMNEADPQQPDWPQTFYGRNYETLYAIKKRYDPFDTFYASTAVGSGDWQVKTDGRLCRVKGNT.

A signal peptide spans 1–23; that stretch reads MRLSIYSSILLLRAMCLVRPTFG. N48, N71, N126, N180, N309, N354, N381, N422, N446, and N481 each carry an N-linked (GlcNAc...) asparagine glycan. Residues 115 to 295 enclose the FAD-binding PCMH-type domain; the sequence is CAPGDMVVYS…YSMTVKAFPD (181 aa).

This sequence belongs to the oxygen-dependent FAD-linked oxidoreductase family. FAD serves as cofactor.

It localises to the vacuole lumen. Its pathway is mycotoxin biosynthesis; patulin biosynthesis. FAD-linked oxidoreductase; part of the gene cluster that mediates the biosynthesis of patulin, an acetate-derived tetraketide mycotoxin produced by several fungal species that shows antimicrobial properties against several bacteria. PatO acts with patJ in the vacuole to convert gentisyl alcohol to isoepoxydon. The pathway begins with the synthesis of 6-methylsalicylic acid by the polyketide synthase (PKS) patK via condensation of acetate and malonate units. The 6-methylsalicylic acid decarboxylase patG then catalyzes the decarboxylation of 6-methylsalicylic acid to yield m-cresol (also known as 3-methylphenol). These first reactions occur in the cytosol. The intermediate m-cresol is then transported into the endoplasmic reticulum where the cytochrome P450 monooxygenase patH converts it to m-hydroxybenzyl alcohol, which is further converted to gentisyl alcohol by the cytochrome P450 monooxygenase patI. The oxidoreductases patJ and patO further convert gentisyl alcohol to isoepoxydon in the vacuole. PatN catalyzes then the transformation of isoepoxydon into phyllostine. The cluster protein patF is responsible for the conversion from phyllostine to neopatulin whereas the alcohol dehydrogenase patD converts neopatulin to E-ascladiol. The steps between isoepoxydon and E-ascladiol occur in the cytosol, and E-ascladiol is probably secreted to the extracellular space by one of the cluster-specific transporters patC or patM. Finally, the secreted patulin synthase patE catalyzes the conversion of E-ascladiol to patulin. This Aspergillus clavatus (strain ATCC 1007 / CBS 513.65 / DSM 816 / NCTC 3887 / NRRL 1 / QM 1276 / 107) protein is FAD-linked oxidoreductase patO.